The sequence spans 410 residues: Multifunctional CCA protein (410 aa).

ATP contacts are provided by G8 and R11. The CTP site is built by G8 and R11. Mg(2+) contacts are provided by E21 and D23. R91, R137, and R140 together coordinate ATP. R91, R137, and R140 together coordinate CTP. One can recognise an HD domain in the interval 228-329 (TGIHSLMTLR…VKLLEQVDAF (102 aa)).

This sequence belongs to the tRNA nucleotidyltransferase/poly(A) polymerase family. Bacterial CCA-adding enzyme type 1 subfamily. Monomer. Can also form homodimers and oligomers. It depends on Mg(2+) as a cofactor. The cofactor is Ni(2+).

The catalysed reaction is a tRNA precursor + 2 CTP + ATP = a tRNA with a 3' CCA end + 3 diphosphate. The enzyme catalyses a tRNA with a 3' CCA end + 2 CTP + ATP = a tRNA with a 3' CCACCA end + 3 diphosphate. Its function is as follows. Catalyzes the addition and repair of the essential 3'-terminal CCA sequence in tRNAs without using a nucleic acid template. Adds these three nucleotides in the order of C, C, and A to the tRNA nucleotide-73, using CTP and ATP as substrates and producing inorganic pyrophosphate. tRNA 3'-terminal CCA addition is required both for tRNA processing and repair. Also involved in tRNA surveillance by mediating tandem CCA addition to generate a CCACCA at the 3' terminus of unstable tRNAs. While stable tRNAs receive only 3'-terminal CCA, unstable tRNAs are marked with CCACCA and rapidly degraded. The chain is Multifunctional CCA protein from Legionella pneumophila (strain Lens).